Consider the following 227-residue polypeptide: UPF0173 metal-dependent hydrolase Oter_4201 (227 aa).

It belongs to the UPF0173 family.

The protein is UPF0173 metal-dependent hydrolase Oter_4201 of Opitutus terrae (strain DSM 11246 / JCM 15787 / PB90-1).